Reading from the N-terminus, the 442-residue chain is MAAHATSEPAVNLPATQFESQVTEPFGVTLLVRHLPDGIPHDIVSRLFSQYGASAVRPCSGGKLRNAAFVDFKNEAFASQAHRQLNGLRFLGKVLQVQRANKPNDNKKSRQIEESVTKGNAFSTVSTNNDSKSGQILSGEPIAPKLGIDYPFPPHLQYAYPPPDANILANITNALIAVPPLYTQVLHLMNKMNLPPPFRLALPTPPLPKAGPQQTDLEHQSSSESEMESDEDIGTSKSGRKRARHGFLVGLGMDKDVPHETVGVKPSSLTPKEIPRIRKNKHVMQIKITSKVTQDEYKEESENEDPADEPKEKDSNLKPFASLEELEKGRLPPQDILSLPMFKNYTAGNPSVVLYIKNLAKDVVIDDFYYIFGSQFESSEVAKSSLGVRLMQEGRMRGQAFLTFPSVEVAHRALNLVNGFVFKGKPMIIQFGRTPGAAKPNE.

One can recognise an RRM 1 domain in the interval 28–102; sequence VTLLVRHLPD…KVLQVQRANK (75 aa). Disordered stretches follow at residues 101-138, 200-242, and 290-317; these read NKPNDNKKSRQIEESVTKGNAFSTVSTNNDSKSGQILS, LALP…GRKR, and SKVTQDEYKEESENEDPADEPKEKDSNL. A compositionally biased stretch (basic and acidic residues) spans 102 to 116; sequence KPNDNKKSRQIEESV. Polar residues predominate over residues 117-136; it reads TKGNAFSTVSTNNDSKSGQI. Residues 200–209 show a composition bias toward pro residues; the sequence is LALPTPPLPK. The span at 297–307 shows a compositional bias: acidic residues; it reads YKEESENEDPA. The RRM 2 domain maps to 352 to 434; sequence VVLYIKNLAK…KPMIIQFGRT (83 aa).

Component of the U11/U12 snRNPs that are part of the U12-type spliceosome. Forms a complex with U12 snRNA. In terms of tissue distribution, ubiquitous.

The protein resides in the nucleus. Component of minor spliceosome required for U12-type intron splicing and alternative splicing of many introns. Binds specifically to U12 snRNA, which is necessary for branch-point site recognition. Required for normal plant development. The sequence is that of U11/U12 small nuclear ribonucleoprotein 65 kDa protein (SNRNP65) from Arabidopsis thaliana (Mouse-ear cress).